Here is a 485-residue protein sequence, read N- to C-terminus: Bifunctional protein GlmU (485 aa).

Residues 1–241 (MSASDFSSAV…ARELAGVNDR (241 aa)) are pyrophosphorylase. UDP-N-acetyl-alpha-D-glucosamine contacts are provided by residues 13–16 (LAAG), K27, Q84, and 89–90 (GT). D114 lines the Mg(2+) pocket. G151, E166, N181, and N239 together coordinate UDP-N-acetyl-alpha-D-glucosamine. N239 contacts Mg(2+). The linker stretch occupies residues 242–262 (VQLAEAGAELNRRTVIAAMRG). Residues 263 to 485 (GATIVDPATT…AAQNVHNQEG (223 aa)) are N-acetyltransferase. UDP-N-acetyl-alpha-D-glucosamine is bound by residues R344 and K362. The Proton acceptor role is filled by H374. Residues Y377 and N388 each contribute to the UDP-N-acetyl-alpha-D-glucosamine site. Acetyl-CoA contacts are provided by residues A391, 397-398 (NY), S416, and A434. Residues 465–485 (RPGTAAAQAAEAAQNVHNQEG) are disordered. Residues 469–478 (AAAQAAEAAQ) are compositionally biased toward low complexity.

It in the N-terminal section; belongs to the N-acetylglucosamine-1-phosphate uridyltransferase family. The protein in the C-terminal section; belongs to the transferase hexapeptide repeat family. Homotrimer. It depends on Mg(2+) as a cofactor.

It localises to the cytoplasm. The catalysed reaction is alpha-D-glucosamine 1-phosphate + acetyl-CoA = N-acetyl-alpha-D-glucosamine 1-phosphate + CoA + H(+). The enzyme catalyses N-acetyl-alpha-D-glucosamine 1-phosphate + UTP + H(+) = UDP-N-acetyl-alpha-D-glucosamine + diphosphate. The protein operates within nucleotide-sugar biosynthesis; UDP-N-acetyl-alpha-D-glucosamine biosynthesis; N-acetyl-alpha-D-glucosamine 1-phosphate from alpha-D-glucosamine 6-phosphate (route II): step 2/2. Its pathway is nucleotide-sugar biosynthesis; UDP-N-acetyl-alpha-D-glucosamine biosynthesis; UDP-N-acetyl-alpha-D-glucosamine from N-acetyl-alpha-D-glucosamine 1-phosphate: step 1/1. It functions in the pathway bacterial outer membrane biogenesis; LPS lipid A biosynthesis. In terms of biological role, catalyzes the last two sequential reactions in the de novo biosynthetic pathway for UDP-N-acetylglucosamine (UDP-GlcNAc). The C-terminal domain catalyzes the transfer of acetyl group from acetyl coenzyme A to glucosamine-1-phosphate (GlcN-1-P) to produce N-acetylglucosamine-1-phosphate (GlcNAc-1-P), which is converted into UDP-GlcNAc by the transfer of uridine 5-monophosphate (from uridine 5-triphosphate), a reaction catalyzed by the N-terminal domain. This Corynebacterium glutamicum (strain R) protein is Bifunctional protein GlmU.